The following is a 911-amino-acid chain: Valine--tRNA ligase (911 aa).

Residues 57 to 67 (PTVSGSLHVGH) carry the 'HIGH' region motif. The 'KMSKS' region motif lies at 599-603 (KMSKS). K602 contacts ATP. The interval 882–911 (EESAAEDAPETEVAVEASELGEPPVKKPKH) is disordered.

It belongs to the class-I aminoacyl-tRNA synthetase family. ValS type 2 subfamily. Monomer.

The protein resides in the cytoplasm. The catalysed reaction is tRNA(Val) + L-valine + ATP = L-valyl-tRNA(Val) + AMP + diphosphate. Its function is as follows. Catalyzes the attachment of valine to tRNA(Val). As ValRS can inadvertently accommodate and process structurally similar amino acids such as threonine, to avoid such errors, it has a 'posttransfer' editing activity that hydrolyzes mischarged Thr-tRNA(Val) in a tRNA-dependent manner. The sequence is that of Valine--tRNA ligase from Bifidobacterium longum subsp. infantis (strain ATCC 15697 / DSM 20088 / JCM 1222 / NCTC 11817 / S12).